The following is a 530-amino-acid chain: 4-alpha-glucanotransferase (530 aa).

This sequence belongs to the disproportionating enzyme family.

It is found in the cytoplasm. The enzyme catalyses Transfers a segment of a (1-&gt;4)-alpha-D-glucan to a new position in an acceptor, which may be glucose or a (1-&gt;4)-alpha-D-glucan.. This chain is 4-alpha-glucanotransferase (malQ), found in Chlamydia caviae (strain ATCC VR-813 / DSM 19441 / 03DC25 / GPIC) (Chlamydophila caviae).